Reading from the N-terminus, the 352-residue chain is N-acetyl-gamma-glutamyl-phosphate reductase (352 aa).

Residue cysteine 155 is part of the active site.

It belongs to the NAGSA dehydrogenase family. Type 1 subfamily.

The protein localises to the cytoplasm. The enzyme catalyses N-acetyl-L-glutamate 5-semialdehyde + phosphate + NADP(+) = N-acetyl-L-glutamyl 5-phosphate + NADPH + H(+). It functions in the pathway amino-acid biosynthesis; L-arginine biosynthesis; N(2)-acetyl-L-ornithine from L-glutamate: step 3/4. Functionally, catalyzes the NADPH-dependent reduction of N-acetyl-5-glutamyl phosphate to yield N-acetyl-L-glutamate 5-semialdehyde. This is N-acetyl-gamma-glutamyl-phosphate reductase from Picosynechococcus sp. (strain ATCC 27264 / PCC 7002 / PR-6) (Agmenellum quadruplicatum).